Consider the following 61-residue polypeptide: MDPNCSCSTGSTCTCSSSCGCKDCKCTSCKKSCCSCCPVGCSKCAQGCVCKGASDKCTCCA.

Met1 is modified (N-acetylmethionine). A beta region spans residues 1-29; the sequence is MDPNCSCSTGSTCTCSSSCGCKDCKCTSC. A divalent metal cation-binding residues include Cys5, Cys7, Cys13, Cys15, Cys19, Cys21, Cys24, Cys26, Cys29, Cys33, Cys34, Cys36, Cys37, Cys41, Cys44, Cys48, Cys50, Cys57, Cys59, and Cys60. Residues 30–61 are alpha; sequence KKSCCSCCPVGCSKCAQGCVCKGASDKCTCCA.

It belongs to the metallothionein superfamily. Type 1 family.

In terms of biological role, metallothioneins have a high content of cysteine residues that bind various heavy metals; these proteins are transcriptionally regulated by both heavy metals and glucocorticoids. In Cricetulus griseus (Chinese hamster), this protein is Metallothionein-1 (MT1).